We begin with the raw amino-acid sequence, 148 residues long: Ribonuclease H (148 aa).

The RNase H type-1 domain occupies 1–141 (MKTVEIYTDG…ADELANLGVK (141 aa)). Mg(2+) contacts are provided by Asp9, Glu47, Asp69, and Asp133.

Belongs to the RNase H family. Monomer. Requires Mg(2+) as cofactor.

The protein resides in the cytoplasm. The catalysed reaction is Endonucleolytic cleavage to 5'-phosphomonoester.. Its function is as follows. Endonuclease that specifically degrades the RNA of RNA-DNA hybrids. The polypeptide is Ribonuclease H (Hahella chejuensis (strain KCTC 2396)).